We begin with the raw amino-acid sequence, 57 residues long: Protein translocase subunit SecE (57 aa).

The helical transmembrane segment at 30–50 (LIAGAGIVFVGFLGFLIFAIM) threads the bilayer.

The protein belongs to the SecE/SEC61-gamma family. Component of the Sec protein translocase complex. Heterotrimer consisting of SecY (alpha), SecG (beta) and SecE (gamma) subunits. The heterotrimers can form oligomers, although 1 heterotrimer is thought to be able to translocate proteins. Interacts with the ribosome. May interact with SecDF, and other proteins may be involved.

Its subcellular location is the cell membrane. Its function is as follows. Essential subunit of the Sec protein translocation channel SecYEG. Clamps together the 2 halves of SecY. May contact the channel plug during translocation. This chain is Protein translocase subunit SecE, found in Haloquadratum walsbyi (strain DSM 16790 / HBSQ001).